The chain runs to 129 residues: Keratin-associated protein 5-6 (129 aa).

Repeat copies occupy residues 28-31 (CCVP), 34-37 (CCKP), 40-43 (CCVP), 90-93 (CCKP), 109-112 (CCKP), and 119-122 (CCVP). The tract at residues 28-112 (CCVPICCCKP…SCCQSSCCKP (85 aa)) is 6 X 4 AA repeats of C-C-X-P.

This sequence belongs to the KRTAP type 5 family. In terms of assembly, interacts with hair keratins. Expressed in hair root and not in skin. Expressed also in liver and skeletal muscle.

Functionally, in the hair cortex, hair keratin intermediate filaments are embedded in an interfilamentous matrix, consisting of hair keratin-associated protein (KRTAP), which are essential for the formation of a rigid and resistant hair shaft through their extensive disulfide bond cross-linking with abundant cysteine residues of hair keratins. The matrix proteins include the high-sulfur and high-glycine-tyrosine keratins. This chain is Keratin-associated protein 5-6 (KRTAP5-6), found in Homo sapiens (Human).